The chain runs to 256 residues: 4-hydroxy-tetrahydrodipicolinate reductase (256 aa).

NAD(+) is bound by residues 12-17 (GINGRV), Asp39, 86-88 (GTT), and 110-113 (AANY). The active-site Proton donor/acceptor is the His144. His145 contacts (S)-2,3,4,5-tetrahydrodipicolinate. Residue Lys148 is the Proton donor of the active site. (S)-2,3,4,5-tetrahydrodipicolinate is bound at residue 154–155 (GT).

Belongs to the DapB family.

The protein localises to the cytoplasm. It carries out the reaction (S)-2,3,4,5-tetrahydrodipicolinate + NAD(+) + H2O = (2S,4S)-4-hydroxy-2,3,4,5-tetrahydrodipicolinate + NADH + H(+). The enzyme catalyses (S)-2,3,4,5-tetrahydrodipicolinate + NADP(+) + H2O = (2S,4S)-4-hydroxy-2,3,4,5-tetrahydrodipicolinate + NADPH + H(+). It participates in amino-acid biosynthesis; L-lysine biosynthesis via DAP pathway; (S)-tetrahydrodipicolinate from L-aspartate: step 4/4. Its function is as follows. Catalyzes the conversion of 4-hydroxy-tetrahydrodipicolinate (HTPA) to tetrahydrodipicolinate. The polypeptide is 4-hydroxy-tetrahydrodipicolinate reductase (Gluconacetobacter diazotrophicus (strain ATCC 49037 / DSM 5601 / CCUG 37298 / CIP 103539 / LMG 7603 / PAl5)).